Consider the following 164-residue polypeptide: C-type lectin 1 (164 aa).

The signal sequence occupies residues 1-23 (MGRFLFASLGLLVVAFSLSGTGA). 3 disulfides stabilise this stretch: C27–C38, C55–C154, and C129–C146. A C-type lectin domain is found at 34-155 (YNVSCYKLFY…CTLLHPFLCQ (122 aa)). N35 and N109 each carry an N-linked (GlcNAc...) asparagine glycan. Positions 119 to 121 (EPN) match the Mannose-binding motif. Ca(2+) contacts are provided by E127, N142, and D143.

This sequence belongs to the true venom lectin family. Expressed by the venom gland.

It is found in the secreted. Its function is as follows. Mannose-binding lectin which recognizes specific carbohydrate structures and agglutinates a variety of animal cells by binding to cell-surface glycoproteins and glycolipids. May be a calcium-dependent lectin. In Hydrophis hardwickii (Hardwick's spine-bellied seasnake), this protein is C-type lectin 1.